An 874-amino-acid chain; its full sequence is Alanine--tRNA ligase (874 aa).

Zn(2+) is bound by residues His562, His566, Cys665, and His669.

This sequence belongs to the class-II aminoacyl-tRNA synthetase family. Requires Zn(2+) as cofactor.

Its subcellular location is the cytoplasm. The enzyme catalyses tRNA(Ala) + L-alanine + ATP = L-alanyl-tRNA(Ala) + AMP + diphosphate. Catalyzes the attachment of alanine to tRNA(Ala) in a two-step reaction: alanine is first activated by ATP to form Ala-AMP and then transferred to the acceptor end of tRNA(Ala). Also edits incorrectly charged Ser-tRNA(Ala) and Gly-tRNA(Ala) via its editing domain. The sequence is that of Alanine--tRNA ligase from Pseudomonas fluorescens (strain Pf0-1).